The primary structure comprises 393 residues: Dwarfin sma-3 (393 aa).

One can recognise an MH1 domain in the interval 10–139 (PAVKKLLGWK…YQRLSRPQGL (130 aa)). The Zn(2+) site is built by C65, C110, C124, and H129. The tract at residues 136–190 (PQGLNSSMPSPQPISSPNTIWQSSGSSTASCASSPSPSVFSEDGGEVQVHQRPPP) is disordered. The segment covering 141–176 (SSMPSPQPISSPNTIWQSSGSSTASCASSPSPSVFS) has biased composition (low complexity). The 197-residue stretch at 197–393 (WAQITYFELN…TNLMEPNSMT (197 aa)) folds into the MH2 domain.

The protein belongs to the dwarfin/SMAD family.

The protein resides in the cytoplasm. It localises to the nucleus. Involved in TGF-beta pathway. Plays a role in male tail tip morphogenesis. The sequence is that of Dwarfin sma-3 from Caenorhabditis elegans.